The primary structure comprises 1214 residues: Genome polyprotein (1214 aa).

Residues 1-55 (NKGKTFTSKYVIMTSNTETPVKPTSRRAGAFYRRVMIVDVTNNAVEKWKSDNPGK) enclose the SF3 helicase domain. Residue Y428 is modified to O-(5'-phospho-RNA)-tyrosine. Residues 523-676 (GVAHKNAIVS…KLIVPYAKVD (154 aa)) form the Peptidase C24 domain. Catalysis depends on for 3CLpro activity residues H557, E578, and C640. Residues 926–1051 (HDRYCVDYSK…IVPPLISSVM (126 aa)) form the RdRp catalytic domain.

Post-translationally, specific enzymatic cleavages in vivo yield mature proteins. Pro-Pol is first autocatalytically cleaved, then processes the whole polyprotein. VPg is uridylylated by the polymerase and is covalently attached to the 5'-end of the polyadenylated genomic and subgenomic RNAs. This uridylylated form acts as a nucleotide-peptide primer for the polymerase.

It carries out the reaction a ribonucleoside 5'-triphosphate + H2O = a ribonucleoside 5'-diphosphate + phosphate + H(+). The catalysed reaction is RNA(n) + a ribonucleoside 5'-triphosphate = RNA(n+1) + diphosphate. The enzyme catalyses Endopeptidase with a preference for cleavage when the P1 position is occupied by Glu-|-Xaa and the P1' position is occupied by Gly-|-Yaa.. Its function is as follows. NTPase presumably plays a role in replication. Despite having similarities with helicases, does not seem to display any helicase activity. Viral genome-linked protein is covalently linked to the 5'-end of the positive-strand, negative-strand genomic RNAs and subgenomic RNA. Acts as a genome-linked replication primer. May recruit ribosome to viral RNA thereby promoting viral proteins translation. Functionally, protease-polymerase p76 processes the polyprotein: Pro-Pol is first released by autocleavage, then all other proteins are cleaved. Cleaves host translation initiation factor eIF4G1 and eIF4G2 thereby inducing a shutdown of host protein synthesis. This shutdown may not prevent viral mRNA from being translated since viral Vpg replaces the cap. May cleave host polyadenylate-binding protein thereby inhibiting cellular translation. It is also an RNA-directed RNA polymerase which replicates genomic and antigenomic viral RNA by recognizing specific signals. Also transcribes a subgenomic mRNA by initiating RNA synthesis internally on antigenomic RNA. This sgRNA codes for structural proteins. Catalyzes the covalent attachment VPg with viral RNAs. The polypeptide is Genome polyprotein (San Miguel sea lion virus serotype 4 (SMSV-4)).